Here is a 101-residue protein sequence, read N- to C-terminus: Small ribosomal subunit protein bS18c (101 aa).

Belongs to the bacterial ribosomal protein bS18 family. In terms of assembly, part of the 30S ribosomal subunit.

It localises to the plastid. The protein localises to the chloroplast. The chain is Small ribosomal subunit protein bS18c from Gossypium hirsutum (Upland cotton).